An 89-amino-acid chain; its full sequence is Small ribosomal subunit protein uS15 (89 aa).

Belongs to the universal ribosomal protein uS15 family. In terms of assembly, part of the 30S ribosomal subunit. Forms a bridge to the 50S subunit in the 70S ribosome, contacting the 23S rRNA.

Functionally, one of the primary rRNA binding proteins, it binds directly to 16S rRNA where it helps nucleate assembly of the platform of the 30S subunit by binding and bridging several RNA helices of the 16S rRNA. Its function is as follows. Forms an intersubunit bridge (bridge B4) with the 23S rRNA of the 50S subunit in the ribosome. This is Small ribosomal subunit protein uS15 from Mycobacterium bovis (strain ATCC BAA-935 / AF2122/97).